A 260-amino-acid chain; its full sequence is Lysine/arginine/ornithine-binding periplasmic protein (260 aa).

Positions 1–22 (MKKSILALSLLVGLSTAASSYA) are cleaved as a signal peptide. Position 33 (Asp-33) interacts with L-arginine. An L-lysine-binding site is contributed by Asp-33. Asp-33 contributes to the L-ornithine binding site. Cys-60 and Cys-67 are disulfide-bonded. Positions 91, 92, 94, 99, 143, and 183 each coordinate L-arginine. L-ornithine-binding residues include Ser-91, Ser-92, Ser-94, Arg-99, Thr-143, and Asp-183. Positions 92, 94, 99, and 143 each coordinate L-lysine.

Belongs to the bacterial solute-binding protein 3 family. In terms of assembly, the complex is composed of two ATP-binding proteins (HisP), two transmembrane proteins (HisM and HisQ) and a solute-binding protein (ArgT).

The protein resides in the periplasm. In terms of biological role, part of the ABC transporter complex HisPMQ-ArgT involved in lysine/arginine/ornithine transport. Binds lysine, arginine and ornithine. Stimulates ATPase activity of HisP. This is Lysine/arginine/ornithine-binding periplasmic protein (argT) from Escherichia coli (strain K12).